The primary structure comprises 258 residues: Phosphate import ATP-binding protein PstB (258 aa).

Positions 12-253 constitute an ABC transporter domain; it reads IQVHNLNFYY…PKMKQTEDYI (242 aa). Position 44-51 (44-51) interacts with ATP; that stretch reads GPSGCGKS.

Belongs to the ABC transporter superfamily. Phosphate importer (TC 3.A.1.7) family. In terms of assembly, the complex is composed of two ATP-binding proteins (PstB), two transmembrane proteins (PstC and PstA) and a solute-binding protein (PstS).

The protein localises to the cell inner membrane. The enzyme catalyses phosphate(out) + ATP + H2O = ADP + 2 phosphate(in) + H(+). In terms of biological role, part of the ABC transporter complex PstSACB involved in phosphate import. Responsible for energy coupling to the transport system. The protein is Phosphate import ATP-binding protein PstB of Photorhabdus laumondii subsp. laumondii (strain DSM 15139 / CIP 105565 / TT01) (Photorhabdus luminescens subsp. laumondii).